A 221-amino-acid polypeptide reads, in one-letter code: Peroxiredoxin 2 (221 aa).

One can recognise a Thioredoxin domain in the interval 15 to 170 (PQIGAPAPDF…IIRIIDALQT (156 aa)). Cys-56 serves as the catalytic Cysteine sulfenic acid (-SOH) intermediate. A substrate-binding site is contributed by Arg-133. A disulfide bridge links Cys-211 with Cys-217.

This sequence belongs to the peroxiredoxin family. Prx6 subfamily. Homodecamer. Pentamer of dimers that assemble into a ring structure.

It localises to the cytoplasm. The enzyme catalyses a hydroperoxide + [thioredoxin]-dithiol = an alcohol + [thioredoxin]-disulfide + H2O. Thiol-specific peroxidase that catalyzes the reduction of hydrogen peroxide and organic hydroperoxides to water and alcohols, respectively. Plays a role in cell protection against oxidative stress by detoxifying peroxides. The chain is Peroxiredoxin 2 from Caldanaerobacter subterraneus subsp. tengcongensis (strain DSM 15242 / JCM 11007 / NBRC 100824 / MB4) (Thermoanaerobacter tengcongensis).